The following is a 235-amino-acid chain: Enolase-phosphatase E1 (235 aa).

Positions 10 and 12 each coordinate Mg(2+). Substrate is bound by residues S130–S131 and K169. Mg(2+) is bound at residue D194.

It belongs to the HAD-like hydrolase superfamily. MasA/MtnC family. In terms of assembly, monomer. The cofactor is Mg(2+).

The protein localises to the cytoplasm. It is found in the nucleus. The enzyme catalyses 5-methylsulfanyl-2,3-dioxopentyl phosphate + H2O = 1,2-dihydroxy-5-(methylsulfanyl)pent-1-en-3-one + phosphate. Its pathway is amino-acid biosynthesis; L-methionine biosynthesis via salvage pathway; L-methionine from S-methyl-5-thio-alpha-D-ribose 1-phosphate: step 3/6. The protein operates within amino-acid biosynthesis; L-methionine biosynthesis via salvage pathway; L-methionine from S-methyl-5-thio-alpha-D-ribose 1-phosphate: step 4/6. Its function is as follows. Bifunctional enzyme that catalyzes the enolization of 2,3-diketo-5-methylthiopentyl-1-phosphate (DK-MTP-1-P) into the intermediate 2-hydroxy-3-keto-5-methylthiopentenyl-1-phosphate (HK-MTPenyl-1-P), which is then dephosphorylated to form the acireductone 1,2-dihydroxy-3-keto-5-methylthiopentene (DHK-MTPene). The chain is Enolase-phosphatase E1 from Komagataella phaffii (strain GS115 / ATCC 20864) (Yeast).